We begin with the raw amino-acid sequence, 288 residues long: Pantothenate synthetase (288 aa).

30-37 is a binding site for ATP; that stretch reads MGALHEGH. H37 functions as the Proton donor in the catalytic mechanism. Q61 provides a ligand contact to (R)-pantoate. Q61 contributes to the beta-alanine binding site. Residue 147-150 coordinates ATP; it reads GEKD. Q153 is a binding site for (R)-pantoate. Residues V176 and 184-187 each bind ATP; that span reads ISSR.

It belongs to the pantothenate synthetase family. In terms of assembly, homodimer.

The protein localises to the cytoplasm. It catalyses the reaction (R)-pantoate + beta-alanine + ATP = (R)-pantothenate + AMP + diphosphate + H(+). Its pathway is cofactor biosynthesis; (R)-pantothenate biosynthesis; (R)-pantothenate from (R)-pantoate and beta-alanine: step 1/1. Catalyzes the condensation of pantoate with beta-alanine in an ATP-dependent reaction via a pantoyl-adenylate intermediate. This Chlorobium phaeobacteroides (strain BS1) protein is Pantothenate synthetase.